Here is a 203-residue protein sequence, read N- to C-terminus: Small ribosomal subunit protein uS4 (203 aa).

The S4 RNA-binding domain occupies 93–156; that stretch reads TRLDNLVFRL…QNLAIVNEAI (64 aa).

It belongs to the universal ribosomal protein uS4 family. Part of the 30S ribosomal subunit. Contacts protein S5. The interaction surface between S4 and S5 is involved in control of translational fidelity.

One of the primary rRNA binding proteins, it binds directly to 16S rRNA where it nucleates assembly of the body of the 30S subunit. In terms of biological role, with S5 and S12 plays an important role in translational accuracy. The chain is Small ribosomal subunit protein uS4 from Lacticaseibacillus casei (strain BL23) (Lactobacillus casei).